We begin with the raw amino-acid sequence, 267 residues long: MDNRPIGLLDSGVGGFTVVKKVIEKLPHESTVFIGDSANMPYGDKSREQIIELTRRSVKFLLQKKVKLIIFACNTATAVAMPTLQNEVEQQIIGVIQSGSLAAARTTKNKKVAVAATPVTINSHAYQKEIKFRDPDIKVMEVAAPELAPLIESQKDYDTNLAAVKRSIAPLKDQDFDTFVLGCTHYPLIQNEFVEALGDKIQIVDPADQVAQYTFNVMRRDGLFSSFDQAGKHEYYTTGDPDKFSEMGRRFLGQADLTSHQVDTRNL.

Substrate contacts are provided by residues D10–S11 and Y42–G43. Catalysis depends on C73, which acts as the Proton donor/acceptor. N74–T75 is a substrate binding site. C183 serves as the catalytic Proton donor/acceptor. T184–H185 is a binding site for substrate.

This sequence belongs to the aspartate/glutamate racemases family.

It carries out the reaction L-glutamate = D-glutamate. It functions in the pathway cell wall biogenesis; peptidoglycan biosynthesis. Functionally, provides the (R)-glutamate required for cell wall biosynthesis. This chain is Glutamate racemase, found in Lactobacillus helveticus (strain DPC 4571).